Reading from the N-terminus, the 115-residue chain is NADH-ubiquinone oxidoreductase chain 3 (115 aa).

The next 3 helical transmembrane spans lie at 4–24, 55–75, and 84–104; these read LMALLVNITLSTLLIIVAFWL, FFLVAITFLLFDLEIALLLPL, and INIMMLTAFILVSVLALGLAY.

It belongs to the complex I subunit 3 family. As to quaternary structure, core subunit of respiratory chain NADH dehydrogenase (Complex I) which is composed of 45 different subunits. Interacts with TMEM186. Interacts with TMEM242.

Its subcellular location is the mitochondrion inner membrane. It catalyses the reaction a ubiquinone + NADH + 5 H(+)(in) = a ubiquinol + NAD(+) + 4 H(+)(out). Its function is as follows. Core subunit of the mitochondrial membrane respiratory chain NADH dehydrogenase (Complex I) which catalyzes electron transfer from NADH through the respiratory chain, using ubiquinone as an electron acceptor. Essential for the catalytic activity of complex I. This Peromyscus melanotis (Black-eared mouse) protein is NADH-ubiquinone oxidoreductase chain 3.